A 239-amino-acid polypeptide reads, in one-letter code: MRPAGRSVQQVRPVTITRHFTRHAEGSVLIAFGDTRVLCTASVEEGVPRFLKGQGQGWITAEYGMLPRATHTRNPREAAKGKQGGRTLEIQRLIARSLRAAVDLTKLGEYTITLDCDVIQADGGTRTASITGACVALADALSSMQKKGQLKTNPMKGFVAAISVGIVAGEAVCDLEYVEDSAAETDMNVVMMEDGRMIEVQGTAEGEPFSQQELNTLLELARGGIDSLVQAQKAALVGA.

Residues arginine 86 and 124-126 each bind phosphate; that span reads GTR.

This sequence belongs to the RNase PH family. In terms of assembly, homohexameric ring arranged as a trimer of dimers.

The enzyme catalyses tRNA(n+1) + phosphate = tRNA(n) + a ribonucleoside 5'-diphosphate. Functionally, phosphorolytic 3'-5' exoribonuclease that plays an important role in tRNA 3'-end maturation. Removes nucleotide residues following the 3'-CCA terminus of tRNAs; can also add nucleotides to the ends of RNA molecules by using nucleoside diphosphates as substrates, but this may not be physiologically important. Probably plays a role in initiation of 16S rRNA degradation (leading to ribosome degradation) during starvation. The chain is Ribonuclease PH from Sodalis glossinidius (strain morsitans).